Here is a 522-residue protein sequence, read N- to C-terminus: 2-isopropylmalate synthase (522 aa).

The Pyruvate carboxyltransferase domain occupies 5–267 (VIIFDTTLRD…ETGINAKEIH (263 aa)). Residues Asp14, His202, His204, and Asn238 each coordinate Mn(2+). The tract at residues 392–522 (QLQQLVVQSD…MQKNRELGGV (131 aa)) is regulatory domain.

Belongs to the alpha-IPM synthase/homocitrate synthase family. LeuA type 1 subfamily. In terms of assembly, homodimer. Requires Mn(2+) as cofactor.

The protein resides in the cytoplasm. It carries out the reaction 3-methyl-2-oxobutanoate + acetyl-CoA + H2O = (2S)-2-isopropylmalate + CoA + H(+). It functions in the pathway amino-acid biosynthesis; L-leucine biosynthesis; L-leucine from 3-methyl-2-oxobutanoate: step 1/4. Its function is as follows. Catalyzes the condensation of the acetyl group of acetyl-CoA with 3-methyl-2-oxobutanoate (2-ketoisovalerate) to form 3-carboxy-3-hydroxy-4-methylpentanoate (2-isopropylmalate). This chain is 2-isopropylmalate synthase, found in Shewanella baltica (strain OS195).